Consider the following 84-residue polypeptide: MSSRSTGERPFTDIITSTRYWIIHIPAITILFASGFLFVYTGLAYDVFGTPRPDEYYNSDNTKKPLVNKRFEAKQQLDEATKNK.

A helical transmembrane segment spans residues Ile22–Phe36. His24 contacts heme.

The protein belongs to the PsbE/PsbF family. Heterodimer of an alpha subunit and a beta subunit. PSII is composed of 1 copy each of membrane proteins PsbA, PsbB, PsbC, PsbD, PsbE, PsbF, PsbH, PsbI, PsbJ, PsbK, PsbL, PsbM, PsbT, PsbX, Psb30/Ycf12, peripheral proteins PsbO, CyanoQ (PsbQ), PsbU, PsbV and a large number of cofactors. It forms dimeric complexes. Requires heme b as cofactor.

It is found in the cell inner membrane. Its function is as follows. This b-type cytochrome is tightly associated with the reaction center of photosystem II (PSII). PSII is a light-driven water:plastoquinone oxidoreductase that uses light energy to abstract electrons from H(2)O, generating O(2) and a proton gradient subsequently used for ATP formation. It consists of a core antenna complex that captures photons, and an electron transfer chain that converts photonic excitation into a charge separation. The polypeptide is Cytochrome b559 subunit alpha (Gloeobacter violaceus (strain ATCC 29082 / PCC 7421)).